A 328-amino-acid chain; its full sequence is NADH-quinone oxidoreductase subunit H 2 (328 aa).

8 consecutive transmembrane segments (helical) span residues 3–23 (LIVA…ILLL), 77–97 (FLFK…FAAI), 119–139 (VALL…IFGG), 165–185 (MGFA…LDIV), 191–211 (VWNV…GLAE), 250–270 (MVLV…GVLI), 272–292 (LPPL…FMWF), and 307–327 (IGWK…GVVF).

This sequence belongs to the complex I subunit 1 family. As to quaternary structure, NDH-1 is composed of 14 different subunits. Subunits NuoA, H, J, K, L, M, N constitute the membrane sector of the complex.

It is found in the cell inner membrane. The catalysed reaction is a quinone + NADH + 5 H(+)(in) = a quinol + NAD(+) + 4 H(+)(out). In terms of biological role, NDH-1 shuttles electrons from NADH, via FMN and iron-sulfur (Fe-S) centers, to quinones in the respiratory chain. The immediate electron acceptor for the enzyme in this species is believed to be ubiquinone. Couples the redox reaction to proton translocation (for every two electrons transferred, four hydrogen ions are translocated across the cytoplasmic membrane), and thus conserves the redox energy in a proton gradient. This subunit may bind ubiquinone. In Rhizobium meliloti (strain 1021) (Ensifer meliloti), this protein is NADH-quinone oxidoreductase subunit H 2.